A 392-amino-acid polypeptide reads, in one-letter code: Tryptophan synthase beta chain (392 aa).

Residue K84 is modified to N6-(pyridoxal phosphate)lysine.

The protein belongs to the TrpB family. As to quaternary structure, tetramer of two alpha and two beta chains. Requires pyridoxal 5'-phosphate as cofactor.

It catalyses the reaction (1S,2R)-1-C-(indol-3-yl)glycerol 3-phosphate + L-serine = D-glyceraldehyde 3-phosphate + L-tryptophan + H2O. The protein operates within amino-acid biosynthesis; L-tryptophan biosynthesis; L-tryptophan from chorismate: step 5/5. Its function is as follows. The beta subunit is responsible for the synthesis of L-tryptophan from indole and L-serine. This chain is Tryptophan synthase beta chain, found in Campylobacter jejuni subsp. doylei (strain ATCC BAA-1458 / RM4099 / 269.97).